A 229-amino-acid chain; its full sequence is Type III pantothenate kinase (229 aa).

6–13 (NIGNSRQH) provides a ligand contact to ATP. Residues Y77 and 81-84 (GIDR) each bind substrate. The active-site Proton acceptor is D83. D103 serves as a coordination point for K(+). An ATP-binding site is contributed by T106. Residue T159 participates in substrate binding.

This sequence belongs to the type III pantothenate kinase family. Homodimer. NH4(+) is required as a cofactor. The cofactor is K(+).

The protein resides in the cytoplasm. The catalysed reaction is (R)-pantothenate + ATP = (R)-4'-phosphopantothenate + ADP + H(+). It functions in the pathway cofactor biosynthesis; coenzyme A biosynthesis; CoA from (R)-pantothenate: step 1/5. Functionally, catalyzes the phosphorylation of pantothenate (Pan), the first step in CoA biosynthesis. This Gloeobacter violaceus (strain ATCC 29082 / PCC 7421) protein is Type III pantothenate kinase.